We begin with the raw amino-acid sequence, 229 residues long: Protein AF_2251 (229 aa).

It belongs to the CinA family.

The polypeptide is Protein AF_2251 (Archaeoglobus fulgidus (strain ATCC 49558 / DSM 4304 / JCM 9628 / NBRC 100126 / VC-16)).